The chain runs to 264 residues: NFAT activation molecule 1 (264 aa).

The signal sequence occupies residues 1–37; sequence MESWLLRRGARVRCLHPPSWLPAWCFLCLLPVPQTLQ. Residues 38 to 159 lie on the Extracellular side of the membrane; the sequence is LTGLVSLTHT…QPPAFKVQEA (122 aa). Positions 49-145 constitute an Ig-like V-type domain; that stretch reads LPIMVSLANT…QSDGVVILVR (97 aa). Residues Cys-64 and Cys-110 are joined by a disulfide bond. Residues Asn-105 and Asn-118 are each glycosylated (N-linked (GlcNAc...) asparagine). A helical transmembrane segment spans residues 160–180; sequence LMLGFTSLMSVLGVLGTALLL. Residues 181–264 lie on the Cytoplasmic side of the membrane; the sequence is WKKKQISVLG…NEFNLVYENL (84 aa). The 21-residue stretch at 212 to 232 folds into the ITAM domain; that stretch reads ESVYTSLQRRETEVYACMKEE. Tyr-215 and Tyr-226 each carry phosphotyrosine.

No direct interaction with the B-cell antigen receptor (BCR). Interacts with SYK; probably involved in BCR signaling. Interacts with ZAP70. N-glycosylated. As to expression, highly expressed in the spleen, expressed by both B- and CD4+ and CD8+ T-cells, as well as non-T- and non-B-cells, including macrophages and neutrophils. Expressed at low levels, if any, in non-immune tissue.

The protein resides in the cell membrane. Functionally, may function in immune system as a receptor which activates via the calcineurin/NFAT-signaling pathway the downstream cytokine gene promoters. Activates the transcription of IL-13 and TNF-alpha promoters. May be involved in the regulation of B-cell, but not T-cell, development. This is NFAT activation molecule 1 (Nfam1) from Mus musculus (Mouse).